The following is a 263-amino-acid chain: UPF0739 protein C1orf74 homolog (263 aa).

The protein belongs to the UPF0739 family.

The sequence is that of UPF0739 protein C1orf74 homolog from Bos taurus (Bovine).